The chain runs to 409 residues: Elongation factor Tu, chloroplastic (409 aa).

Residues 10–214 (KPHVNIGTIG…AVDEYIPTPE (205 aa)) enclose the tr-type G domain. Residues 19–26 (GHVDHGKT) are G1. 19-26 (GHVDHGKT) is a binding site for GTP. Mg(2+) is bound at residue T26. The interval 60–64 (GITIN) is G2. The segment at 81–84 (DCPG) is G3. GTP contacts are provided by residues 81 to 85 (DCPGH) and 136 to 139 (NKED). The tract at residues 136-139 (NKED) is G4. The tract at residues 174–176 (SAL) is G5.

Belongs to the TRAFAC class translation factor GTPase superfamily. Classic translation factor GTPase family. EF-Tu/EF-1A subfamily.

The protein localises to the plastid. The protein resides in the chloroplast. It carries out the reaction GTP + H2O = GDP + phosphate + H(+). GTP hydrolase that promotes the GTP-dependent binding of aminoacyl-tRNA to the A-site of ribosomes during protein biosynthesis. The polypeptide is Elongation factor Tu, chloroplastic (tufA) (Phaeodactylum tricornutum (strain CCAP 1055/1)).